The chain runs to 95 residues: Small ribosomal subunit protein bS6 (95 aa).

This sequence belongs to the bacterial ribosomal protein bS6 family.

Binds together with bS18 to 16S ribosomal RNA. The chain is Small ribosomal subunit protein bS6 from Exiguobacterium sibiricum (strain DSM 17290 / CCUG 55495 / CIP 109462 / JCM 13490 / 255-15).